The chain runs to 564 residues: Dihydroxy-acid dehydratase (564 aa).

A [2Fe-2S] cluster-binding site is contributed by Cys-51. A Mg(2+)-binding site is contributed by Asp-83. A [2Fe-2S] cluster-binding site is contributed by Cys-124. Mg(2+)-binding residues include Asp-125 and Lys-126. At Lys-126 the chain carries N6-carboxylysine. Cys-196 serves as a coordination point for [2Fe-2S] cluster. Glu-448 contributes to the Mg(2+) binding site. Ser-474 functions as the Proton acceptor in the catalytic mechanism.

The protein belongs to the IlvD/Edd family. Homodimer. The cofactor is [2Fe-2S] cluster. Mg(2+) serves as cofactor.

It carries out the reaction (2R)-2,3-dihydroxy-3-methylbutanoate = 3-methyl-2-oxobutanoate + H2O. It catalyses the reaction (2R,3R)-2,3-dihydroxy-3-methylpentanoate = (S)-3-methyl-2-oxopentanoate + H2O. Its pathway is amino-acid biosynthesis; L-isoleucine biosynthesis; L-isoleucine from 2-oxobutanoate: step 3/4. The protein operates within amino-acid biosynthesis; L-valine biosynthesis; L-valine from pyruvate: step 3/4. In terms of biological role, functions in the biosynthesis of branched-chain amino acids. Catalyzes the dehydration of (2R,3R)-2,3-dihydroxy-3-methylpentanoate (2,3-dihydroxy-3-methylvalerate) into 2-oxo-3-methylpentanoate (2-oxo-3-methylvalerate) and of (2R)-2,3-dihydroxy-3-methylbutanoate (2,3-dihydroxyisovalerate) into 2-oxo-3-methylbutanoate (2-oxoisovalerate), the penultimate precursor to L-isoleucine and L-valine, respectively. This is Dihydroxy-acid dehydratase from Pyrobaculum calidifontis (strain DSM 21063 / JCM 11548 / VA1).